A 220-amino-acid polypeptide reads, in one-letter code: Urease accessory protein UreG (220 aa).

GTP is bound at residue glycine 18–threonine 25.

This sequence belongs to the SIMIBI class G3E GTPase family. UreG subfamily. In terms of assembly, homodimer. UreD, UreF and UreG form a complex that acts as a GTP-hydrolysis-dependent molecular chaperone, activating the urease apoprotein by helping to assemble the nickel containing metallocenter of UreC. The UreE protein probably delivers the nickel.

The protein resides in the cytoplasm. Its function is as follows. Facilitates the functional incorporation of the urease nickel metallocenter. This process requires GTP hydrolysis, probably effectuated by UreG. The protein is Urease accessory protein UreG of Yersinia pestis.